Here is a 245-residue protein sequence, read N- to C-terminus: tRNA pseudouridine synthase A 1 (245 aa).

The Nucleophile role is filled by aspartate 53. Tyrosine 111 is a binding site for substrate.

The protein belongs to the tRNA pseudouridine synthase TruA family. Homodimer.

The enzyme catalyses uridine(38/39/40) in tRNA = pseudouridine(38/39/40) in tRNA. Functionally, formation of pseudouridine at positions 38, 39 and 40 in the anticodon stem and loop of transfer RNAs. The sequence is that of tRNA pseudouridine synthase A 1 from Clostridium tetani (strain Massachusetts / E88).